Consider the following 88-residue polypeptide: Large ribosomal subunit protein bL27 (88 aa).

The disordered stretch occupies residues 1 to 23 (MAHKKGTGSTRNGRDSNSKRLGV).

This sequence belongs to the bacterial ribosomal protein bL27 family.

The protein is Large ribosomal subunit protein bL27 of Synechococcus sp. (strain CC9902).